The following is a 295-amino-acid chain: Cytidine deaminase (295 aa).

CMP/dCMP-type deaminase domains follow at residues 48–168 (EDAD…FGPA) and 187–295 (DDDE…YLSL). 89 to 91 (NME) is a binding site for substrate. Residue His-102 coordinates Zn(2+). Glu-104 serves as the catalytic Proton donor. Cys-129 and Cys-132 together coordinate Zn(2+).

It belongs to the cytidine and deoxycytidylate deaminase family. In terms of assembly, homodimer. It depends on Zn(2+) as a cofactor.

The catalysed reaction is cytidine + H2O + H(+) = uridine + NH4(+). It carries out the reaction 2'-deoxycytidine + H2O + H(+) = 2'-deoxyuridine + NH4(+). Functionally, this enzyme scavenges exogenous and endogenous cytidine and 2'-deoxycytidine for UMP synthesis. The polypeptide is Cytidine deaminase (Vibrio cholerae serotype O1 (strain ATCC 39315 / El Tor Inaba N16961)).